The sequence spans 360 residues: UDP-D-xylose:L-fucose alpha-1,3-D-xylosyltransferase MGP4 (360 aa).

The interval 1–25 is disordered; it reads MAQQKFLHQRPIQNPFTNPFSSSPL. Residues 1 to 41 are Cytoplasmic-facing; that stretch reads MAQQKFLHQRPIQNPFTNPFSSSPLSTSSISNRPISLLSRN. Positions 14 to 25 are enriched in low complexity; sequence NPFTNPFSSSPL. The chain crosses the membrane as a helical; Signal-anchor for type II membrane protein span at residues 42-62; the sequence is GLLLLLALLVILGVFLPWAGS. Over 63 to 360 the chain is Lumenal; that stretch reads PLFPSPNKLS…ASESPLGKLE (298 aa). N93 and N168 each carry an N-linked (GlcNAc...) asparagine glycan. A DXD motif motif is present at residues 191-193; sequence DVD. N-linked (GlcNAc...) asparagine glycans are attached at residues N285 and N310.

This sequence belongs to the glycosyltransferase 77 family. It depends on Mn(2+) as a cofactor. The cofactor is Mg(2+). As to expression, widely expressed.

The protein localises to the golgi apparatus membrane. Functionally, catalyzes the transfer of D-xylose from UDP-alpha-D-xylose onto L-fucose. Probably involved in the biosynthesis of rhamnogalacturonan II (RG-II) through xylosylation of the internal fucose moiety of the A-chain of RG-II, a structurally complex pectic polysaccharide of the primary cell wall. RG-II is essential for the cell wall integrity of rapidly growing tissues such as roots and pollen tube growth and elongation. The sequence is that of UDP-D-xylose:L-fucose alpha-1,3-D-xylosyltransferase MGP4 from Arabidopsis thaliana (Mouse-ear cress).